The following is a 297-amino-acid chain: Vacuolar protein sorting-associated protein 26C (297 aa).

The protein belongs to the VPS26 family. In terms of assembly, component of the commander complex that is essential for endosomal recycling of transmembrane cargos; the commander complex is composed of the CCC subcomplex and the retriever subcomplex. Component of the heterotrimeric retriever complex consisting of VPS26C, VPS29 and VPS35L; within the complex interacts with VPS35L. Interacts with SNX17 (via C-terminus); the interaction is direct and associates SNX17 with the retriever complex. Interacts with SNX31; the interaction is direct. Ubiquitously expressed.

The protein resides in the endosome. Component of the commander complex that is essential for endosomal recycling of transmembrane cargos; the commander complex is composed of the CCC subcomplex and the retriever subcomplex. Component of the retriever complex, which is a heterotrimeric complex related to retromer cargo-selective complex (CSC) and essential for retromer-independent retrieval and recycling of numerous cargos such as integrin alpha-5/beta-1 (ITGA5:ITGB1). The recruitment of the retriever complex to the endosomal membrane involves CCC and WASH complexes. In the endosomes, drives the retriever and recycling of NxxY-motif-containing cargo proteins by coupling to SNX17, a cargo essential for the homeostatic maintenance of numerous cell surface proteins associated with processes that include cell migration, cell adhesion, nutrient supply and cell signaling. Functionally, (Microbial infection) The heterotrimeric retriever complex, in collaboration with the CCC complex, mediates the exit of human papillomavirus to the cell surface. In Homo sapiens (Human), this protein is Vacuolar protein sorting-associated protein 26C.